A 159-amino-acid chain; its full sequence is MGKANKKAKAPSATIAQNRKARHEYHLEEHFEAGLVLEGWEVKSLRAGKGNLTEAYVLLKNGEAFLFGARFEPLNTASTHVNPDPTRTRKLLLHRRELGRVFGGVQKDGFTCVPVSLYWKKGFAKCDIALAKGKQKFDKRATEKERDWNRQKQRVLRQR.

Residues 140-150 (RATEKERDWNR) show a composition bias toward basic and acidic residues. Positions 140 to 159 (RATEKERDWNRQKQRVLRQR) are disordered.

Belongs to the SmpB family.

It localises to the cytoplasm. Required for rescue of stalled ribosomes mediated by trans-translation. Binds to transfer-messenger RNA (tmRNA), required for stable association of tmRNA with ribosomes. tmRNA and SmpB together mimic tRNA shape, replacing the anticodon stem-loop with SmpB. tmRNA is encoded by the ssrA gene; the 2 termini fold to resemble tRNA(Ala) and it encodes a 'tag peptide', a short internal open reading frame. During trans-translation Ala-aminoacylated tmRNA acts like a tRNA, entering the A-site of stalled ribosomes, displacing the stalled mRNA. The ribosome then switches to translate the ORF on the tmRNA; the nascent peptide is terminated with the 'tag peptide' encoded by the tmRNA and targeted for degradation. The ribosome is freed to recommence translation, which seems to be the essential function of trans-translation. The chain is SsrA-binding protein from Alcanivorax borkumensis (strain ATCC 700651 / DSM 11573 / NCIMB 13689 / SK2).